A 101-amino-acid chain; its full sequence is Small ribosomal subunit protein uS10 (101 aa).

Belongs to the universal ribosomal protein uS10 family. In terms of assembly, part of the 30S ribosomal subunit.

In terms of biological role, involved in the binding of tRNA to the ribosomes. In Mycobacterium avium (strain 104), this protein is Small ribosomal subunit protein uS10.